The following is a 406-amino-acid chain: Exodeoxyribonuclease 7 large subunit (406 aa).

Belongs to the XseA family. As to quaternary structure, heterooligomer composed of large and small subunits.

It localises to the cytoplasm. It catalyses the reaction Exonucleolytic cleavage in either 5'- to 3'- or 3'- to 5'-direction to yield nucleoside 5'-phosphates.. Its function is as follows. Bidirectionally degrades single-stranded DNA into large acid-insoluble oligonucleotides, which are then degraded further into small acid-soluble oligonucleotides. The protein is Exodeoxyribonuclease 7 large subunit of Thermobifida fusca (strain YX).